The following is a 413-amino-acid chain: uncharacterized protein (413 aa).

Disordered stretches follow at residues 108-158 and 232-257; these read ESVP…SKIS and DRLG…RLGA. Phosphoserine is present on Ser-115. A compositionally biased stretch (polar residues) spans 127–139; that stretch reads SAASRMIANSLNH. Residue Ser-141 is modified to Phosphoserine. Lys-239 participates in a covalent cross-link: Glycyl lysine isopeptide (Lys-Gly) (interchain with G-Cter in SUMO2). Residues Ser-269 and Ser-296 each carry the phosphoserine modification. A disordered region spans residues 290 to 336; it reads RGPTKASAQPALTVKAKAASSATSTATTPKLRRLALPSRPGLQKKPD. The span at 302-318 shows a compositional bias: low complexity; the sequence is TVKAKAASSATSTATTP. Ser-342 carries the post-translational modification Phosphoserine.

This is an uncharacterized protein from Mus musculus (Mouse).